The chain runs to 70 residues: Probable ferredoxin TA0517 (70 aa).

2 consecutive 4Fe-4S ferredoxin-type domains span residues 8–36 and 37–66; these read TEMD…WLDE and TVIK…AEWF. [4Fe-4S] cluster is bound by residues cysteine 17, cysteine 20, cysteine 23, cysteine 27, cysteine 46, cysteine 49, cysteine 52, and cysteine 56.

It depends on [4Fe-4S] cluster as a cofactor.

In terms of biological role, ferredoxins are iron-sulfur proteins that transfer electrons in a wide variety of metabolic reactions. The polypeptide is Probable ferredoxin TA0517 (Thermoplasma acidophilum (strain ATCC 25905 / DSM 1728 / JCM 9062 / NBRC 15155 / AMRC-C165)).